Consider the following 348-residue polypeptide: Type II methyltransferase M.BglI (348 aa).

This sequence belongs to the N(4)/N(6)-methyltransferase family.

It carries out the reaction a 2'-deoxycytidine in DNA + S-adenosyl-L-methionine = an N(4)-methyl-2'-deoxycytidine in DNA + S-adenosyl-L-homocysteine + H(+). Functionally, a beta subtype methylase, recognizes the double-stranded sequence 5'-GCCNNNNNGGC-3', methylates C-2 on both strands, and protects the DNA from cleavage by the BglI endonuclease. The polypeptide is Type II methyltransferase M.BglI (bglIM) (Bacillus subtilis).